Here is a 259-residue protein sequence, read N- to C-terminus: Imidazole glycerol phosphate synthase subunit HisF (259 aa).

Residues D11 and D130 contribute to the active site.

The protein belongs to the HisA/HisF family. In terms of assembly, heterodimer of HisH and HisF.

Its subcellular location is the cytoplasm. The catalysed reaction is 5-[(5-phospho-1-deoxy-D-ribulos-1-ylimino)methylamino]-1-(5-phospho-beta-D-ribosyl)imidazole-4-carboxamide + L-glutamine = D-erythro-1-(imidazol-4-yl)glycerol 3-phosphate + 5-amino-1-(5-phospho-beta-D-ribosyl)imidazole-4-carboxamide + L-glutamate + H(+). Its pathway is amino-acid biosynthesis; L-histidine biosynthesis; L-histidine from 5-phospho-alpha-D-ribose 1-diphosphate: step 5/9. IGPS catalyzes the conversion of PRFAR and glutamine to IGP, AICAR and glutamate. The HisF subunit catalyzes the cyclization activity that produces IGP and AICAR from PRFAR using the ammonia provided by the HisH subunit. This chain is Imidazole glycerol phosphate synthase subunit HisF, found in Polaromonas naphthalenivorans (strain CJ2).